Consider the following 185-residue polypeptide: Large ribosomal subunit protein uL22 (185 aa).

Residues 160 to 185 form a disordered region; that stretch reads VSHDDSQKKKVSKKKLARQKEKMMRE.

Belongs to the universal ribosomal protein uL22 family.

This Maconellicoccus hirsutus (Pink hibiscus mealybug) protein is Large ribosomal subunit protein uL22 (RpL17).